Reading from the N-terminus, the 114-residue chain is ATP synthase subunit beta, mitochondrial (114 aa).

Residue 44–51 (GGAGVGKT) coordinates ATP.

It belongs to the ATPase alpha/beta chains family. As to quaternary structure, F-type ATPases have 2 components, CF(1) - the catalytic core - and CF(0) - the membrane proton channel. CF(1) has five subunits: alpha(3), beta(3), gamma(1), delta(1), epsilon(1). CF(0) has three main subunits: a, b and c.

The protein localises to the mitochondrion. Its subcellular location is the mitochondrion inner membrane. The enzyme catalyses ATP + H2O + 4 H(+)(in) = ADP + phosphate + 5 H(+)(out). Functionally, mitochondrial membrane ATP synthase (F(1)F(0) ATP synthase or Complex V) produces ATP from ADP in the presence of a proton gradient across the membrane which is generated by electron transport complexes of the respiratory chain. F-type ATPases consist of two structural domains, F(1) - containing the extramembraneous catalytic core, and F(0) - containing the membrane proton channel, linked together by a central stalk and a peripheral stalk. During catalysis, ATP synthesis in the catalytic domain of F(1) is coupled via a rotary mechanism of the central stalk subunits to proton translocation. Subunits alpha and beta form the catalytic core in F(1). Rotation of the central stalk against the surrounding alpha(3)beta(3) subunits leads to hydrolysis of ATP in three separate catalytic sites on the beta subunits. This chain is ATP synthase subunit beta, mitochondrial (atp2), found in Penicillium glabrum (Penicillium frequentans).